The chain runs to 95 residues: Large ribosomal subunit protein bL28 (95 aa).

The protein belongs to the bacterial ribosomal protein bL28 family.

In Dinoroseobacter shibae (strain DSM 16493 / NCIMB 14021 / DFL 12), this protein is Large ribosomal subunit protein bL28.